The sequence spans 92 residues: Large ribosomal subunit protein bL25 (92 aa).

It belongs to the bacterial ribosomal protein bL25 family. Part of the 50S ribosomal subunit; part of the 5S rRNA/L5/L18/L25 subcomplex. Contacts the 5S rRNA. Binds to the 5S rRNA independently of L5 and L18.

In terms of biological role, this is one of the proteins that binds to the 5S RNA in the ribosome where it forms part of the central protuberance. In Vibrio vulnificus (strain CMCP6), this protein is Large ribosomal subunit protein bL25.